The primary structure comprises 677 residues: Transketolase (677 aa).

His27 lines the substrate pocket. Thiamine diphosphate-binding positions include His66 and 114–116 (GPL). A Mg(2+)-binding site is contributed by Asp155. Thiamine diphosphate-binding residues include Gly156 and Asn185. Mg(2+)-binding residues include Asn185 and Ile187. Positions 261, 356, and 383 each coordinate substrate. Position 261 (His261) interacts with thiamine diphosphate. 2 residues coordinate thiamine diphosphate: Glu415 and Phe442. The active-site Proton donor is Glu415. Residues His466, Asp474, and Arg525 each contribute to the substrate site.

This sequence belongs to the transketolase family. In terms of assembly, homodimer. Mg(2+) is required as a cofactor. It depends on Ca(2+) as a cofactor. The cofactor is Mn(2+). Co(2+) serves as cofactor. Requires thiamine diphosphate as cofactor.

It catalyses the reaction D-sedoheptulose 7-phosphate + D-glyceraldehyde 3-phosphate = aldehydo-D-ribose 5-phosphate + D-xylulose 5-phosphate. Functionally, catalyzes the transfer of a two-carbon ketol group from a ketose donor to an aldose acceptor, via a covalent intermediate with the cofactor thiamine pyrophosphate. The protein is Transketolase (TKT) of Scheffersomyces stipitis (strain ATCC 58785 / CBS 6054 / NBRC 10063 / NRRL Y-11545) (Yeast).